An 81-amino-acid polypeptide reads, in one-letter code: DNA-directed RNA polymerase subunit Rpo6 (81 aa).

The protein belongs to the archaeal Rpo6/eukaryotic RPB6 RNA polymerase subunit family. Part of the RNA polymerase complex.

The protein resides in the cytoplasm. The enzyme catalyses RNA(n) + a ribonucleoside 5'-triphosphate = RNA(n+1) + diphosphate. Functionally, DNA-dependent RNA polymerase (RNAP) catalyzes the transcription of DNA into RNA using the four ribonucleoside triphosphates as substrates. This Thermofilum pendens (strain DSM 2475 / Hrk 5) protein is DNA-directed RNA polymerase subunit Rpo6.